The following is a 677-amino-acid chain: Epithelial splicing regulatory protein 1 (677 aa).

RRM domains lie at 225-302, 326-406, and 445-525; these read TVVR…KATG, VIVR…RSTA, and DCVR…QCSA. Ser-543 carries the phosphoserine modification. Residue Arg-578 is modified to Omega-N-methylarginine.

Belongs to the ESRP family.

Its subcellular location is the nucleus. Its function is as follows. mRNA splicing factor that regulates the formation of epithelial cell-specific isoforms. Specifically regulates the expression of FGFR2-IIIb, an epithelial cell-specific isoform of FGFR2. Also regulates the splicing of CD44, CTNND1, ENAH, 3 transcripts that undergo changes in splicing during the epithelial-to-mesenchymal transition (EMT). Acts by directly binding specific sequences in mRNAs. Binds the GU-rich sequence motifs in the ISE/ISS-3, a cis-element regulatory region present in the mRNA of FGFR2. Regulates splicing and expression of genes involved in inner ear development, auditory hair cell differentiation, and cell fate specification in the cochlear epithelium. This is Epithelial splicing regulatory protein 1 (Esrp1) from Rattus norvegicus (Rat).